A 146-amino-acid chain; its full sequence is Hemoglobin subunit beta (146 aa).

The Globin domain occupies 2–146 (HWTAEEKQLI…VAHALARKYH (145 aa)). Heme b-binding residues include H63 and H92.

The protein belongs to the globin family. Heterotetramer of two alpha chains and two beta chains. As to expression, red blood cells.

Functionally, involved in oxygen transport from the lung to the various peripheral tissues. In Phalacrocorax carbo (Great cormorant), this protein is Hemoglobin subunit beta (HBB).